An 883-amino-acid chain; its full sequence is Alanine--tRNA ligase (883 aa).

The Zn(2+) site is built by His563, His567, Cys673, and His677.

Belongs to the class-II aminoacyl-tRNA synthetase family. Zn(2+) serves as cofactor.

It is found in the cytoplasm. The catalysed reaction is tRNA(Ala) + L-alanine + ATP = L-alanyl-tRNA(Ala) + AMP + diphosphate. Catalyzes the attachment of alanine to tRNA(Ala) in a two-step reaction: alanine is first activated by ATP to form Ala-AMP and then transferred to the acceptor end of tRNA(Ala). Also edits incorrectly charged Ser-tRNA(Ala) and Gly-tRNA(Ala) via its editing domain. The polypeptide is Alanine--tRNA ligase (Caulobacter sp. (strain K31)).